The primary structure comprises 199 residues: Chaperone protein TorD (199 aa).

This sequence belongs to the TorD/DmsD family. TorD subfamily.

It localises to the cytoplasm. In terms of biological role, involved in the biogenesis of TorA. Acts on TorA before the insertion of the molybdenum cofactor and, as a result, probably favors a conformation of the apoenzyme that is competent for acquiring the cofactor. This is Chaperone protein TorD from Escherichia coli O45:K1 (strain S88 / ExPEC).